Here is a 61-residue protein sequence, read N- to C-terminus: Small ribosomal subunit protein uS14 (61 aa).

The Zn(2+) site is built by C24, C27, C40, and C43.

Belongs to the universal ribosomal protein uS14 family. Zinc-binding uS14 subfamily. Part of the 30S ribosomal subunit. Contacts proteins S3 and S10. Zn(2+) is required as a cofactor.

Binds 16S rRNA, required for the assembly of 30S particles and may also be responsible for determining the conformation of the 16S rRNA at the A site. The polypeptide is Small ribosomal subunit protein uS14 (Clostridium botulinum (strain ATCC 19397 / Type A)).